The following is a 641-amino-acid chain: 1-phosphatidylinositol 4,5-bisphosphate phosphodiesterase zeta-1 (641 aa).

The region spanning 35-70 is the EF-hand domain; it reads CSYIHVKRIFKDNDRLKQGRITIEEFRAIYRILTHR. Residues 155–299 enclose the PI-PLC X-box domain; that stretch reads QDMTHPLNDY…LKFKVLVKNK (145 aa). Catalysis depends on residues His-170 and His-215. The PI-PLC Y-box domain occupies 382-498; the sequence is LSDLVIYTKA…GYILKPHFLR (117 aa). The 125-residue stretch at 498–622 folds into the C2 domain; that stretch reads RESESYFNPS…KGYRRVPLFS (125 aa).

Interacts via its C2 domain with PtdIns(3)P and, to a lesser extent, PtdIns(5)P in vitro. It depends on Ca(2+) as a cofactor.

The protein resides in the nucleus. Its subcellular location is the cytoplasm. It is found in the perinuclear region. The enzyme catalyses a 1,2-diacyl-sn-glycero-3-phospho-(1D-myo-inositol-4,5-bisphosphate) + H2O = 1D-myo-inositol 1,4,5-trisphosphate + a 1,2-diacyl-sn-glycerol + H(+). Functionally, the production of the second messenger molecules diacylglycerol (DAG) and inositol 1,4,5-trisphosphate (IP3) is mediated by activated phosphatidylinositol-specific phospholipase C enzymes. In vitro, hydrolyzes PtdIns(4,5)P2 in a Ca(2+)-dependent manner. Triggers intracellular Ca(2+) oscillations in oocytes solely during M phase and is involved in inducing oocyte activation and initiating embryonic development up to the blastocyst stage. Is therefore a strong candidate for the egg-activating soluble sperm factor that is transferred from the sperm into the egg cytoplasm following gamete membrane fusion. May exert an inhibitory effect on phospholipase-C-coupled processes that depend on calcium ions and protein kinase C, including CFTR trafficking and function. This Macaca fascicularis (Crab-eating macaque) protein is 1-phosphatidylinositol 4,5-bisphosphate phosphodiesterase zeta-1.